The sequence spans 129 residues: MKNLGIGTGRRKTAVARVCIRMGNGNVTVNRRDVGAYFPTAEQLRRVREPLFATANERRYDVIVNVYGGGLDGQAGACAHGIARALVRADASNQASLRAGGLLTRDSRMVERKKYGQRGARRRFQFSKR.

It belongs to the universal ribosomal protein uS9 family.

The polypeptide is Small ribosomal subunit protein uS9 (rpsI) (Treponema pallidum (strain Nichols)).